Consider the following 368-residue polypeptide: Histidinol-phosphate aminotransferase (368 aa).

N6-(pyridoxal phosphate)lysine is present on K228.

This sequence belongs to the class-II pyridoxal-phosphate-dependent aminotransferase family. Histidinol-phosphate aminotransferase subfamily. Requires pyridoxal 5'-phosphate as cofactor.

The catalysed reaction is L-histidinol phosphate + 2-oxoglutarate = 3-(imidazol-4-yl)-2-oxopropyl phosphate + L-glutamate. It participates in amino-acid biosynthesis; L-histidine biosynthesis; L-histidine from 5-phospho-alpha-D-ribose 1-diphosphate: step 7/9. The sequence is that of Histidinol-phosphate aminotransferase from Methanosarcina mazei (strain ATCC BAA-159 / DSM 3647 / Goe1 / Go1 / JCM 11833 / OCM 88) (Methanosarcina frisia).